The primary structure comprises 269 residues: uncharacterized protein (269 aa).

Residue 15-41 coordinates NADP(+); it reads QKSVLITGCSSGIGLESALELKRQGFH. Ser-146 serves as a coordination point for substrate. Residue Tyr-159 is the Proton acceptor of the active site.

This sequence belongs to the short-chain dehydrogenases/reductases (SDR) family.

This is an uncharacterized protein from Escherichia coli O6:H1 (strain CFT073 / ATCC 700928 / UPEC).